We begin with the raw amino-acid sequence, 370 residues long: Cytochrome b (370 aa).

Helical transmembrane passes span 25–45, 69–90, 105–125, and 170–190; these read FGSM…FLAV, WMMQ…YIHI, WLSG…GYVL, and FFAL…LHIL. Positions 75 and 89 each coordinate heme b. Residues histidine 174 and histidine 188 each contribute to the heme b site. Histidine 193 is an a ubiquinone binding site. Helical transmembrane passes span 218–238, 280–300, 312–332, and 339–358; these read YKDM…VSFF, LGGA…PFTH, FMQL…WTAT, and FTTI…ISNP.

The protein belongs to the cytochrome b family. In terms of assembly, the cytochrome bc1 complex contains 3 respiratory subunits (MT-CYB, CYC1 and UQCRFS1), 2 core proteins (UQCRC1 and UQCRC2) and probably 6 low-molecular weight proteins. Heme b is required as a cofactor.

The protein localises to the mitochondrion inner membrane. Functionally, component of the ubiquinol-cytochrome c reductase complex (complex III or cytochrome b-c1 complex) that is part of the mitochondrial respiratory chain. The b-c1 complex mediates electron transfer from ubiquinol to cytochrome c. Contributes to the generation of a proton gradient across the mitochondrial membrane that is then used for ATP synthesis. In Chilabothrus exsul (Abaco Island boa), this protein is Cytochrome b (MT-CYB).